The following is a 157-amino-acid chain: Chromophore lyase CpcS/CpeS 1 (157 aa).

The protein belongs to the CpcS/CpeS biliprotein lyase family.

It is found in the plastid. Its subcellular location is the organellar chromatophore. Its function is as follows. Covalently attaches a chromophore to Cys residue(s) of phycobiliproteins. This Paulinella chromatophora protein is Chromophore lyase CpcS/CpeS 1.